A 641-amino-acid chain; its full sequence is Tetracycline resistance protein TetS (641 aa).

Positions 1-242 constitute a tr-type G domain; sequence MKIINIGILA…VITSKLFSPT (242 aa). GTP-binding positions include 10-17, 74-78, and 128-131; these read AHVDAGKT, DTPGH, and NKID.

This sequence belongs to the TRAFAC class translation factor GTPase superfamily. Classic translation factor GTPase family. TetM/TetO subfamily.

Functionally, abolishes the inhibitory effect of tetracyclin on protein synthesis by a non-covalent modification of the ribosomes. The chain is Tetracycline resistance protein TetS (tetS) from Listeria monocytogenes.